A 132-amino-acid chain; its full sequence is Small ribosomal subunit protein uS8 (132 aa).

Belongs to the universal ribosomal protein uS8 family. In terms of assembly, part of the 30S ribosomal subunit. Contacts proteins S5 and S12.

Functionally, one of the primary rRNA binding proteins, it binds directly to 16S rRNA central domain where it helps coordinate assembly of the platform of the 30S subunit. The sequence is that of Small ribosomal subunit protein uS8 from Azorhizobium caulinodans (strain ATCC 43989 / DSM 5975 / JCM 20966 / LMG 6465 / NBRC 14845 / NCIMB 13405 / ORS 571).